Reading from the N-terminus, the 282-residue chain is Homeobox protein CDX-4 (282 aa).

Disordered regions lie at residues 13–36 and 98–156; these read MYPG…GGSG and MNDM…SPYA. A compositionally biased stretch (low complexity) spans 20–29; sequence SPGGSSTAGV. Composition is skewed to polar residues over residues 110-124 and 133-148; these read DYST…SNGG and SLVS…TSPS. The homeobox DNA-binding region spans 171 to 230; the sequence is KEKYRVVYTDHQRLELEKEFHCNRYITIRRKSELAVNLGLSERQVKIWFQNRRAKERKMI.

Belongs to the Caudal homeobox family.

The protein resides in the nucleus. The sequence is that of Homeobox protein CDX-4 (Cdx4) from Mus musculus (Mouse).